Reading from the N-terminus, the 133-residue chain is Large-conductance mechanosensitive channel (133 aa).

2 helical membrane passes run 14 to 34 (VVDL…VTTL) and 73 to 93 (FITV…MVVV).

The protein belongs to the MscL family. In terms of assembly, homopentamer.

Its subcellular location is the cell membrane. Its function is as follows. Channel that opens in response to stretch forces in the membrane lipid bilayer. May participate in the regulation of osmotic pressure changes within the cell. This Renibacterium salmoninarum (strain ATCC 33209 / DSM 20767 / JCM 11484 / NBRC 15589 / NCIMB 2235) protein is Large-conductance mechanosensitive channel.